The following is a 734-amino-acid chain: Platelet glycoprotein Ib alpha chain (734 aa).

An N-terminal signal peptide occupies residues 1 to 16 (MALLILLFLLPSPLHS). The region spanning 17–47 (QHTCSISKVTSLLEVNCENKKLTALPADLPA) is the LRRNT domain. Over 17–612 (QHTCSISKVT…LNSDFCCFLP (596 aa)) the chain is Extracellular. Residues Cys-20 and Cys-33 are joined by a disulfide bond. 7 LRR repeats span residues 48–69 (DTGILHLGENQLGTFSTASLVH), 72–93 (HLTYLYLDRCELTSLQTNGKLI), 94–115 (KLENLDLSHNNLKSLPSLGWAL), 117–140 (ALTTLDVSFNKLGSLSPGVLDGLS), 141–162 (QLQELYLQNNDLKSLPPGLLLP), 165–188 (KLKKLNLANNKLRELPSGLLDGLE), and 189–210 (DLDTLYLQRNWLRTIPKGFFGT). The region spanning 221–282 (NSWYCDCEIL…YSYPGKGCPT (62 aa)) is the LRRCT domain. Intrachain disulfides connect Cys-225/Cys-264 and Cys-227/Cys-280. Tyr-292 is modified (sulfotyrosine). 4 O-linked (GalNAc...) threonine glycosylation sites follow: Thr-301, Thr-311, Thr-315, and Thr-316. O-linked (GalNAc...) serine glycosylation occurs at Ser-335. O-linked (GalNAc...) threonine glycans are attached at residues Thr-339, Thr-348, Thr-358, and Thr-377. Ser-382 is a glycosylation site (O-linked (GalNAc...) serine). Residues Thr-384, Thr-385, and Thr-405 are each glycosylated (O-linked (GalNAc...) threonine). 2 disordered regions span residues 406-429 (STLTTPEHSTTPVPTTTILTTPEH) and 460-526 (EPST…PEPS). 8 O-linked (GalNAc...) threonine glycosylation sites follow: Thr-512, Thr-516, Thr-519, Thr-530, Thr-542, Thr-546, Thr-550, and Thr-562. Ser-572 carries an O-linked (GalNAc...) serine glycan. O-linked (GalNAc...) threonine glycosylation is present at Thr-573. A helical membrane pass occupies residues 613 to 633 (LGFYVLGLLWLLFASVVLILL). The Cytoplasmic segment spans residues 634 to 734 (LTWTWHVTPH…VGIRYSGHSL (101 aa)). Ser-711 and Ser-714 each carry phosphoserine.

As to quaternary structure, two GP-Ib beta are disulfide-linked to one GP-Ib alpha. GP-IX is complexed with the GP-Ib heterodimer via a non covalent linkage. Interacts with FLNB. Interacts with FLNA (via filamin repeats 4, 9, 12, 17, 19, 21, and 23). Post-translationally, O-glycosylated. In terms of processing, glycocalicin is the product of a proteolytic cleavage/shedding, catalyzed by ADAM17, which releases most of the extracellular domain. Binding sites for vWF and thrombin are in this part of the protein.

The protein localises to the membrane. In terms of biological role, GP-Ib, a surface membrane protein of platelets, participates in the formation of platelet plugs by binding to the A1 domain of vWF, which is already bound to the subendothelium. The chain is Platelet glycoprotein Ib alpha chain (Gp1ba) from Mus musculus (Mouse).